Consider the following 558-residue polypeptide: Putative polypeptide N-acetylgalactosaminyltransferase 13 (558 aa).

Residues 1 to 12 are Cytoplasmic-facing; the sequence is MHAGGKYCGPRH. Residues 13 to 32 form a helical; Signal-anchor for type II membrane protein membrane-spanning segment; sequence CSFYIIAFLICQLFFLVIFI. At 33 to 558 the chain is on the lumenal side; that stretch reads RNDDASSANE…QFALEMEGQT (526 aa). Asn-48 and Asn-111 each carry an N-linked (GlcNAc...) asparagine glycan. 4 cysteine pairs are disulfide-bonded: Cys-97–Cys-335, Cys-326–Cys-412, Cys-445–Cys-460, and Cys-484–Cys-498. The interval 109–225 is catalytic subdomain A; the sequence is EANVSVVISF…EGWLEPLLER (117 aa). 2 residues coordinate substrate: Asp-150 and Arg-186. Asp-209 provides a ligand contact to Mn(2+). Ser-210 is a substrate binding site. His-211 contacts Mn(2+). The segment at 281–343 is catalytic subdomain B; sequence PYQSPAFAGG…PCSRIGHIFR (63 aa). Trp-312 contacts substrate. His-340 is a Mn(2+) binding site. Substrate is bound by residues Arg-343 and His-346. In terms of domain architecture, Ricin B-type lectin spans 422-556; the sequence is VSPELRMHFD…SFQFALEMEG (135 aa). The N-linked (GlcNAc...) asparagine glycan is linked to Asn-501. Cys-525 and Cys-539 form a disulfide bridge.

Belongs to the glycosyltransferase 2 family. GalNAc-T subfamily. It depends on Mn(2+) as a cofactor. During embryonic stages 16-17, very weak expression in the midgut.

It localises to the golgi apparatus membrane. It carries out the reaction L-seryl-[protein] + UDP-N-acetyl-alpha-D-galactosamine = a 3-O-[N-acetyl-alpha-D-galactosaminyl]-L-seryl-[protein] + UDP + H(+). The catalysed reaction is L-threonyl-[protein] + UDP-N-acetyl-alpha-D-galactosamine = a 3-O-[N-acetyl-alpha-D-galactosaminyl]-L-threonyl-[protein] + UDP + H(+). Its pathway is protein modification; protein glycosylation. Its function is as follows. May catalyze the initial reaction in O-linked oligosaccharide biosynthesis, the transfer of an N-acetyl-D-galactosamine residue to a serine or threonine residue on the protein receptor. The chain is Putative polypeptide N-acetylgalactosaminyltransferase 13 (pgant13) from Drosophila melanogaster (Fruit fly).